A 204-amino-acid chain; its full sequence is Chaperone protein TorD (204 aa).

This sequence belongs to the TorD/DmsD family. TorD subfamily.

The protein resides in the cytoplasm. Functionally, involved in the biogenesis of TorA. Acts on TorA before the insertion of the molybdenum cofactor and, as a result, probably favors a conformation of the apoenzyme that is competent for acquiring the cofactor. The polypeptide is Chaperone protein TorD (Shewanella baltica (strain OS223)).